Consider the following 498-residue polypeptide: ATP synthase subunit beta, chloroplastic (498 aa).

An ATP-binding site is contributed by 172 to 179; sequence GGAGVGKT.

This sequence belongs to the ATPase alpha/beta chains family. F-type ATPases have 2 components, CF(1) - the catalytic core - and CF(0) - the membrane proton channel. CF(1) has five subunits: alpha(3), beta(3), gamma(1), delta(1), epsilon(1). CF(0) has four main subunits: a(1), b(1), b'(1) and c(9-12).

Its subcellular location is the plastid. The protein resides in the chloroplast thylakoid membrane. The catalysed reaction is ATP + H2O + 4 H(+)(in) = ADP + phosphate + 5 H(+)(out). In terms of biological role, produces ATP from ADP in the presence of a proton gradient across the membrane. The catalytic sites are hosted primarily by the beta subunits. In Nicotiana sp. (Tobacco), this protein is ATP synthase subunit beta, chloroplastic.